Consider the following 343-residue polypeptide: Anthranilate phosphoribosyltransferase (343 aa).

5-phospho-alpha-D-ribose 1-diphosphate-binding positions include Gly-84, 87–88 (GD), Thr-92, 94–97 (NIST), 112–120 (KHGNRSASS), and Ser-124. Residue Gly-84 participates in anthranilate binding. Position 96 (Ser-96) interacts with Mg(2+). Position 115 (Asn-115) interacts with anthranilate. Position 170 (Arg-170) interacts with anthranilate. Mg(2+) is bound by residues Asp-229 and Glu-230.

It belongs to the anthranilate phosphoribosyltransferase family. As to quaternary structure, homodimer. Requires Mg(2+) as cofactor.

It carries out the reaction N-(5-phospho-beta-D-ribosyl)anthranilate + diphosphate = 5-phospho-alpha-D-ribose 1-diphosphate + anthranilate. The protein operates within amino-acid biosynthesis; L-tryptophan biosynthesis; L-tryptophan from chorismate: step 2/5. Functionally, catalyzes the transfer of the phosphoribosyl group of 5-phosphorylribose-1-pyrophosphate (PRPP) to anthranilate to yield N-(5'-phosphoribosyl)-anthranilate (PRA). This is Anthranilate phosphoribosyltransferase from Bordetella bronchiseptica (strain ATCC BAA-588 / NCTC 13252 / RB50) (Alcaligenes bronchisepticus).